Reading from the N-terminus, the 326-residue chain is B3 domain-containing protein At5g60130 (326 aa).

The TF-B3 DNA-binding region spans 12-110 (PKFFKVYLPD…CFHFCIYEHR (99 aa)). A disordered region spans residues 124–222 (EEIKVESDSD…DEDERQYLDD (99 aa)). Residues 143-199 (LSLDEDDDDSDYNCGEDNDSDDYADEAAVEKDDNDADDEDVDNVADDVPVEDDDYVE) show a composition bias toward acidic residues.

It is found in the nucleus. In Arabidopsis thaliana (Mouse-ear cress), this protein is B3 domain-containing protein At5g60130.